Here is a 145-residue protein sequence, read N- to C-terminus: Ribosome-binding factor A (145 aa).

Residues 1 to 10 (MKRPSSHGRR) are compositionally biased toward basic residues. Disordered regions lie at residues 1 to 21 (MKRP…RQLR) and 124 to 145 (DDPK…KDED).

It belongs to the RbfA family. Monomer. Binds 30S ribosomal subunits, but not 50S ribosomal subunits or 70S ribosomes.

It localises to the cytoplasm. Its function is as follows. One of several proteins that assist in the late maturation steps of the functional core of the 30S ribosomal subunit. Associates with free 30S ribosomal subunits (but not with 30S subunits that are part of 70S ribosomes or polysomes). Required for efficient processing of 16S rRNA. May interact with the 5'-terminal helix region of 16S rRNA. In Phenylobacterium zucineum (strain HLK1), this protein is Ribosome-binding factor A.